Here is a 202-residue protein sequence, read N- to C-terminus: MMIIVMLLLSYLIGAFPSGFVIGKLFFKKDIRQFGSGNTGATNSFRVLGRPAGFLVTFLDIFKGFITVFFPLWLPVHADGPISTFFTNGLIVGLFAILGHVYPVYLKFQGGKAVATSAGVVLGVNPILLLILAIIFFIILKIFKYVSLASIVAAICCVIGSLIIQDYILLVVSFLVSIILIIRHRSNIARIFRGEEPKIKWM.

The next 6 helical transmembrane spans lie at 2-22 (MIIV…GFVI), 54-74 (FLVT…PLWL), 85-105 (FFTN…YPVY), 120-140 (VVLG…FIIL), 141-161 (KIFK…VIGS), and 162-182 (LIIQ…ILII).

This sequence belongs to the PlsY family. In terms of assembly, probably interacts with PlsX.

The protein resides in the cell membrane. The enzyme catalyses an acyl phosphate + sn-glycerol 3-phosphate = a 1-acyl-sn-glycero-3-phosphate + phosphate. It participates in lipid metabolism; phospholipid metabolism. Catalyzes the transfer of an acyl group from acyl-phosphate (acyl-PO(4)) to glycerol-3-phosphate (G3P) to form lysophosphatidic acid (LPA). This enzyme utilizes acyl-phosphate as fatty acyl donor, but not acyl-CoA or acyl-ACP. This Staphylococcus aureus (strain bovine RF122 / ET3-1) protein is Glycerol-3-phosphate acyltransferase.